We begin with the raw amino-acid sequence, 350 residues long: Arabinogalactan endo-beta-1,4-galactanase (350 aa).

An N-terminal signal peptide occupies residues 1 to 16; the sequence is MFASLLLAALPLLTHA. N-linked (GlcNAc...) asparagine glycosylation occurs at N128. E152 serves as the catalytic Proton donor. The active-site Nucleophile is E262.

The protein belongs to the glycosyl hydrolase 53 family. Post-translationally, glycosylated.

The catalysed reaction is The enzyme specifically hydrolyzes (1-&gt;4)-beta-D-galactosidic linkages in type I arabinogalactans.. This chain is Arabinogalactan endo-beta-1,4-galactanase (gal1), found in Aspergillus aculeatus.